Reading from the N-terminus, the 176-residue chain is Retinol-binding protein 4-B (176 aa).

Serine 1 is subject to N-acetylserine. 3 cysteine pairs are disulfide-bonded: cysteine 3/cysteine 159, cysteine 69/cysteine 173, and cysteine 119/cysteine 128. Glutamine 97 lines the substrate pocket.

This sequence belongs to the calycin superfamily. Lipocalin family.

It localises to the secreted. Its function is as follows. RBP delivers retinol from the liver stores to the peripheral tissues. In plasma, the RBP-retinol complex interacts with transthyretin, this prevents its loss by filtration through the kidney glomeruli. This is Retinol-binding protein 4-B (rbp4b) from Oncorhynchus mykiss (Rainbow trout).